The primary structure comprises 269 residues: Putative pyridoxine kinase (269 aa).

Position 139 (Asn-139) interacts with ATP. Glu-142 contributes to the Mg(2+) binding site. ATP-binding positions include 176–180 (KGGGR), Asp-189, Val-205, Gly-214, and Lys-239.

This sequence belongs to the ThiD family.

It catalyses the reaction pyridoxal + ATP = pyridoxal 5'-phosphate + ADP + H(+). Its function is as follows. Phosphorylates B6 vitamers; functions in a salvage pathway. Uses pyridoxal, pyridoxine, and pyridoxamine as substrates. The sequence is that of Putative pyridoxine kinase (pdxK) from Treponema pallidum (strain Nichols).